The sequence spans 323 residues: Elongation factor P--(R)-beta-lysine ligase (323 aa).

Position 76-78 (76-78) interacts with substrate; it reads SPE. Residues 100 to 102 and asparagine 109 each bind ATP; that span reads RNE. Residue tyrosine 118 participates in substrate binding. Residue 242–243 coordinates ATP; the sequence is EL. Substrate is bound at residue glutamate 249. Glycine 298 contacts ATP.

This sequence belongs to the class-II aminoacyl-tRNA synthetase family. EpmA subfamily. In terms of assembly, homodimer.

It carries out the reaction D-beta-lysine + L-lysyl-[protein] + ATP = N(6)-((3R)-3,6-diaminohexanoyl)-L-lysyl-[protein] + AMP + diphosphate + H(+). Functionally, with EpmB is involved in the beta-lysylation step of the post-translational modification of translation elongation factor P (EF-P). Catalyzes the ATP-dependent activation of (R)-beta-lysine produced by EpmB, forming a lysyl-adenylate, from which the beta-lysyl moiety is then transferred to the epsilon-amino group of a conserved specific lysine residue in EF-P. This chain is Elongation factor P--(R)-beta-lysine ligase, found in Histophilus somni (strain 129Pt) (Haemophilus somnus).